A 700-amino-acid polypeptide reads, in one-letter code: Elongation factor G 2 (700 aa).

In terms of domain architecture, tr-type G spans Glu-8–Ile-290. GTP contacts are provided by residues Ala-17–Thr-24, Asp-88–His-92, and Asn-142–Asp-145.

Belongs to the TRAFAC class translation factor GTPase superfamily. Classic translation factor GTPase family. EF-G/EF-2 subfamily.

Its subcellular location is the cytoplasm. Catalyzes the GTP-dependent ribosomal translocation step during translation elongation. During this step, the ribosome changes from the pre-translocational (PRE) to the post-translocational (POST) state as the newly formed A-site-bound peptidyl-tRNA and P-site-bound deacylated tRNA move to the P and E sites, respectively. Catalyzes the coordinated movement of the two tRNA molecules, the mRNA and conformational changes in the ribosome. This is Elongation factor G 2 (fusB) from Ralstonia nicotianae (strain ATCC BAA-1114 / GMI1000) (Ralstonia solanacearum).